The following is a 130-amino-acid chain: Blasticidin-S deaminase (130 aa).

The CMP/dCMP-type deaminase domain maps to 1 to 129 (MPLSQEESTL…ELLPSGYMNR (129 aa)). S28 is a substrate binding site. C54 serves as a coordination point for Zn(2+). Catalysis depends on E56, which acts as the Proton donor. Position 82 (R82) interacts with substrate. Zn(2+)-binding residues include C88 and C91. Y126 provides a ligand contact to substrate.

Belongs to the cytidine and deoxycytidylate deaminase family. In terms of assembly, homotetramer. Zn(2+) serves as cofactor.

It catalyses the reaction blasticidin S + H2O + H(+) = deaminohydroxyblasticidin S + NH4(+). Its function is as follows. Catalyzes the deamination of the cytosine moiety of the antibiotics blasticidin S, cytomycin and acetylblasticidin S. This Aspergillus terreus (strain NIH 2624 / FGSC A1156) protein is Blasticidin-S deaminase (bsd).